Here is a 232-residue protein sequence, read N- to C-terminus: Sugar fermentation stimulation protein homolog (232 aa).

The protein belongs to the SfsA family.

This chain is Sugar fermentation stimulation protein homolog, found in Shouchella clausii (strain KSM-K16) (Alkalihalobacillus clausii).